Reading from the N-terminus, the 411-residue chain is Probable peptidoglycan glycosyltransferase FtsW (411 aa).

Residues 1 to 40 (MLERMLPFLGRKRDKAAADLPVRVGHSAPRNSRMLEYDQN) are Cytoplasmic-facing. The helical transmembrane segment at 41-61 (LVWVTLLLLAYGLVMVYSATI) threads the bilayer. The Periplasmic portion of the chain corresponds to 62 to 81 (SFHDSPRYAQWSPYHYFIRD). A helical transmembrane segment spans residues 82–102 (LFSIAAALLASWIVVQIPMAE). Residues 103–109 (LQKWSMR) lie on the Cytoplasmic side of the membrane. The chain crosses the membrane as a helical span at residues 110 to 130 (FFFLSLIGLVLVLLPHIGKDV). At 131 to 136 (NGSKRW) the chain is on the periplasmic side. Residues 137–157 (VVFPGGLNFQPSELVKLTALI) form a helical membrane-spanning segment. Over 158-172 (YAADFMVRKQEVKQS) the chain is Cytoplasmic. Residues 173–193 (LLKTFLPMMAVMMIVGVLLLA) form a helical membrane-spanning segment. The Periplasmic segment spans residues 194–196 (EPD). A helical transmembrane segment spans residues 197–217 (MGAFLVIASITLAILFLGGAN). The Cytoplasmic portion of the chain corresponds to 218 to 219 (GK). The chain crosses the membrane as a helical span at residues 220–240 (LFSVFSVAVIGAFVLMIVLSP). At 241 to 298 (WRRDRIFAYLNPWSESNALGSAYQLSHALIAMGRGEWFGVGLGGSIEKLHYLPEAHTD) the chain is on the periplasmic side. The chain crosses the membrane as a helical span at residues 299 to 319 (FLLAIIGEELGLVGVGVVIFA). Residues 320–347 (FYWIVRRAFDIGRQALVLDRMYSALVAQ) are Cytoplasmic-facing. A helical membrane pass occupies residues 348–368 (GIGVWIGGQAFINIGVNLGLL). At 369 to 374 (PTKGLT) the chain is on the periplasmic side. The helical transmembrane segment at 375–395 (LPLMSYGGSALLLNCMAIAVL) threads the bilayer. The Cytoplasmic segment spans residues 396 to 411 (LRVDFENRILMRGGHV).

It belongs to the SEDS family. FtsW subfamily.

The protein localises to the cell inner membrane. The enzyme catalyses [GlcNAc-(1-&gt;4)-Mur2Ac(oyl-L-Ala-gamma-D-Glu-L-Lys-D-Ala-D-Ala)](n)-di-trans,octa-cis-undecaprenyl diphosphate + beta-D-GlcNAc-(1-&gt;4)-Mur2Ac(oyl-L-Ala-gamma-D-Glu-L-Lys-D-Ala-D-Ala)-di-trans,octa-cis-undecaprenyl diphosphate = [GlcNAc-(1-&gt;4)-Mur2Ac(oyl-L-Ala-gamma-D-Glu-L-Lys-D-Ala-D-Ala)](n+1)-di-trans,octa-cis-undecaprenyl diphosphate + di-trans,octa-cis-undecaprenyl diphosphate + H(+). It functions in the pathway cell wall biogenesis; peptidoglycan biosynthesis. Peptidoglycan polymerase that is essential for cell division. The sequence is that of Probable peptidoglycan glycosyltransferase FtsW from Thiomonas intermedia (strain K12) (Thiobacillus intermedius).